Consider the following 339-residue polypeptide: Biotin synthase (339 aa).

Positions 55–288 (LSEGALHSCS…GKIIKFAAGR (234 aa)) constitute a Radical SAM core domain. Cysteine 73, cysteine 77, and cysteine 80 together coordinate [4Fe-4S] cluster. The [2Fe-2S] cluster site is built by cysteine 152, cysteine 213, and lysine 283.

This sequence belongs to the radical SAM superfamily. Biotin synthase family. In terms of assembly, homodimer. The cofactor is [4Fe-4S] cluster. Requires [2Fe-2S] cluster as cofactor.

It carries out the reaction (4R,5S)-dethiobiotin + (sulfur carrier)-SH + 2 reduced [2Fe-2S]-[ferredoxin] + 2 S-adenosyl-L-methionine = (sulfur carrier)-H + biotin + 2 5'-deoxyadenosine + 2 L-methionine + 2 oxidized [2Fe-2S]-[ferredoxin]. It participates in cofactor biosynthesis; biotin biosynthesis; biotin from 7,8-diaminononanoate: step 2/2. Its function is as follows. Catalyzes the conversion of dethiobiotin (DTB) to biotin by the insertion of a sulfur atom into dethiobiotin via a radical-based mechanism. The polypeptide is Biotin synthase (Chlorobium phaeobacteroides (strain BS1)).